The chain runs to 368 residues: RNA polymerase sigma factor SigA (368 aa).

Basic and acidic residues predominate over residues 71–83 (NEKDSSDTDDKIN). The segment at 71–90 (NEKDSSDTDDKINPNDLSAP) is disordered. The sigma-70 factor domain-2 stretch occupies residues 135-205 (LAEANLRLVV…TRAIADQART (71 aa)). Residues 159 to 162 (DLIQ) carry the Interaction with polymerase core subunit RpoC motif. Positions 214 to 290 (ETINKLIRVQ…DQEAQSPSDH (77 aa)) are sigma-70 factor domain-3. The sigma-70 factor domain-4 stretch occupies residues 303-356 (VLDTLTDREENVLRLRFGLDDGRTRTLEEVGKVFGVTRERIRQIEAKALRKLRH). The segment at residues 329–348 (LEEVGKVFGVTRERIRQIEA) is a DNA-binding region (H-T-H motif).

The protein belongs to the sigma-70 factor family. RpoD/SigA subfamily. As to quaternary structure, interacts transiently with the RNA polymerase catalytic core.

The protein localises to the cytoplasm. In terms of biological role, sigma factors are initiation factors that promote the attachment of RNA polymerase to specific initiation sites and are then released. This sigma factor is the primary sigma factor during exponential growth. In Staphylococcus epidermidis (strain ATCC 35984 / DSM 28319 / BCRC 17069 / CCUG 31568 / BM 3577 / RP62A), this protein is RNA polymerase sigma factor SigA.